The chain runs to 864 residues: Probable M1 family aminopeptidase 1 (864 aa).

Substrate is bound by residues E149 and 289 to 293 (GAMEN). H325 serves as a coordination point for Zn(2+). The active-site Proton acceptor is E326. The Zn(2+) site is built by H329 and E348.

Belongs to the peptidase M1 family. Requires Zn(2+) as cofactor.

This chain is Probable M1 family aminopeptidase 1, found in Encephalitozoon cuniculi (strain GB-M1) (Microsporidian parasite).